Consider the following 342-residue polypeptide: S-adenosylmethionine:tRNA ribosyltransferase-isomerase (342 aa).

Belongs to the QueA family. As to quaternary structure, monomer.

It localises to the cytoplasm. It carries out the reaction 7-aminomethyl-7-carbaguanosine(34) in tRNA + S-adenosyl-L-methionine = epoxyqueuosine(34) in tRNA + adenine + L-methionine + 2 H(+). The protein operates within tRNA modification; tRNA-queuosine biosynthesis. Its function is as follows. Transfers and isomerizes the ribose moiety from AdoMet to the 7-aminomethyl group of 7-deazaguanine (preQ1-tRNA) to give epoxyqueuosine (oQ-tRNA). This chain is S-adenosylmethionine:tRNA ribosyltransferase-isomerase, found in Listeria welshimeri serovar 6b (strain ATCC 35897 / DSM 20650 / CCUG 15529 / CIP 8149 / NCTC 11857 / SLCC 5334 / V8).